The following is a 275-amino-acid chain: ATP synthase subunit delta (275 aa).

It belongs to the ATPase delta chain family. F-type ATPases have 2 components, F(1) - the catalytic core - and F(0) - the membrane proton channel. F(1) has five subunits: alpha(3), beta(3), gamma(1), delta(1), epsilon(1). F(0) has three main subunits: a(1), b(2) and c(10-14). The alpha and beta chains form an alternating ring which encloses part of the gamma chain. F(1) is attached to F(0) by a central stalk formed by the gamma and epsilon chains, while a peripheral stalk is formed by the delta and b chains.

It is found in the cell membrane. F(1)F(0) ATP synthase produces ATP from ADP in the presence of a proton or sodium gradient. F-type ATPases consist of two structural domains, F(1) containing the extramembraneous catalytic core and F(0) containing the membrane proton channel, linked together by a central stalk and a peripheral stalk. During catalysis, ATP synthesis in the catalytic domain of F(1) is coupled via a rotary mechanism of the central stalk subunits to proton translocation. In terms of biological role, this protein is part of the stalk that links CF(0) to CF(1). It either transmits conformational changes from CF(0) to CF(1) or is implicated in proton conduction. This Pseudarthrobacter chlorophenolicus (strain ATCC 700700 / DSM 12829 / CIP 107037 / JCM 12360 / KCTC 9906 / NCIMB 13794 / A6) (Arthrobacter chlorophenolicus) protein is ATP synthase subunit delta.